Here is a 410-residue protein sequence, read N- to C-terminus: Mating-type locus allele B7 protein (410 aa).

The interval 1 to 110 (MSSDPNFSLT…VNVGSPAVGC (110 aa)) is variable domain between B alleles. The homeobox; TALE-type DNA-binding region spans 107 to 184 (AVGCRNLSED…NARRRSGWSH (78 aa)). Residues 111-410 (RNLSEDLPAY…PFLCLSVAFV (300 aa)) are highly conserved between B alleles. 3 disordered regions span residues 202-225 (RAKLSSSTQSSPPSPMPEYPSNNL), 278-336 (TPKP…PELS), and 374-394 (ARGNRKVKALPKRAGKQQPDE). The Nuclear localization signal motif lies at 276-308 (KKTPKPGMPRPVTTVAKRQPARKTKPAAKPNSR). Over residues 306–336 (NSRTANPRASTTPSIDSTLDSSKLESTPELS) the composition is skewed to polar residues. The not essential for B7 function stretch occupies residues 333-410 (PELSMCSTAD…PFLCLSVAFV (78 aa)). Over residues 375-388 (RGNRKVKALPKRAG) the composition is skewed to basic residues.

Belongs to the TALE/M-ATYP homeobox family.

Its subcellular location is the nucleus. Functionally, the B locus has at least 25 alleles, and any combination of two different B alleles yields a multimeric regulatory protein, that activates genes responsible for the pathogenicity and for the sexual development of the fungus within the corn plant. This Mycosarcoma maydis (Corn smut fungus) protein is Mating-type locus allele B7 protein.